A 500-amino-acid polypeptide reads, in one-letter code: Probable cytosol aminopeptidase (500 aa).

The Mn(2+) site is built by lysine 269 and aspartate 274. Lysine 281 is an active-site residue. Aspartate 292, aspartate 351, and glutamate 353 together coordinate Mn(2+). Residue arginine 355 is part of the active site.

Belongs to the peptidase M17 family. Mn(2+) serves as cofactor.

The protein resides in the cytoplasm. The catalysed reaction is Release of an N-terminal amino acid, Xaa-|-Yaa-, in which Xaa is preferably Leu, but may be other amino acids including Pro although not Arg or Lys, and Yaa may be Pro. Amino acid amides and methyl esters are also readily hydrolyzed, but rates on arylamides are exceedingly low.. The enzyme catalyses Release of an N-terminal amino acid, preferentially leucine, but not glutamic or aspartic acids.. Its function is as follows. Presumably involved in the processing and regular turnover of intracellular proteins. Catalyzes the removal of unsubstituted N-terminal amino acids from various peptides. The protein is Probable cytosol aminopeptidase of Acidithiobacillus ferrooxidans (strain ATCC 23270 / DSM 14882 / CIP 104768 / NCIMB 8455) (Ferrobacillus ferrooxidans (strain ATCC 23270)).